The primary structure comprises 486 residues: Betaine aldehyde dehydrogenase (486 aa).

2 residues coordinate K(+): Thr-23 and Asp-90. 147-149 (GAW) serves as a coordination point for NAD(+). Lys-159 acts as the Charge relay system in catalysis. NAD(+)-binding positions include 173 to 176 (KPSE) and 226 to 229 (ESGT). Leu-241 provides a ligand contact to K(+). Glu-247 serves as the catalytic Proton acceptor. Residues Gly-249, Cys-281, and Glu-382 each coordinate NAD(+). Residue Cys-281 is the Nucleophile of the active site. The residue at position 281 (Cys-281) is a Cysteine sulfenic acid (-SOH). K(+) contacts are provided by Lys-452 and Gly-455. Glu-459 functions as the Charge relay system in the catalytic mechanism.

This sequence belongs to the aldehyde dehydrogenase family. Dimer of dimers. Requires K(+) as cofactor.

The enzyme catalyses betaine aldehyde + NAD(+) + H2O = glycine betaine + NADH + 2 H(+). The protein operates within amine and polyamine biosynthesis; betaine biosynthesis via choline pathway; betaine from betaine aldehyde: step 1/1. In terms of biological role, involved in the biosynthesis of the osmoprotectant glycine betaine. Catalyzes the irreversible oxidation of betaine aldehyde to the corresponding acid. This is Betaine aldehyde dehydrogenase from Vibrio campbellii (strain ATCC BAA-1116).